The sequence spans 794 residues: MKGSSESSSRGLNNTSGVSEFCTDGSKSLSHIDYVRSLLGSHKEANLGGLDDDSIVRALECEDVSLRQWLDNPDRSVDAFECFHVFRQIVEIVNAAHSQGIVVHNVRPSCFVMSSFNNVSFIESASCSDSGSDEDATTKSREIGSSRQEEILSERRSKQQEEVKKQPFPMKQILAMEMSWYTSHEEDNGSLCNCASDIYRLGVLLFELFCPVSSREEKSRTMSSLRHRVLPPQILLNWPKEASFCLWLLHPEPSCRPSMSELLQSEFINEPRENLEEREAAMELRDRIEEQELLLEFLFLIQQRKQEAADKLQDTISLLSSDIDQVVKRQLVLQQKGRDVRSFLASRKRIRQGAETTAAEEENDDNSIDEESKLDDTLESTLLESSRLMRNLKKLESVYFATRYRQIKAATAAEKPLARYYSALSCNGRSSEKSSMSQPSKDPINDSRQGGWIDPFLEGLCKYLSFSKLRVKADLKQGDLLNSSNLVCAIGFDRDGEFFATAGVNKKIKIFECESIIKDGRDIHYPVVELASRSKLSGICWNSYIKSQVASSNFEGVVQVWDVARNQLVTEMKEHEKRVWSIDYSSADPTLLASGSDDGSVKLWSINQGVSIGTIKTKANICCVQFPSETGRSLAFGSADHKVYYYDLRNPKLPLCTMIGHHKTVSYVRFVDSSTLVSSSTDNTLKLWDLSMSISGINETPLHSFMGHTNVKNFVGLSVSDGYIATGSETNEVFVYHKAFPMPVLSYKFKTIDPVSELEVDDASQFISSVCWRGQSSTLVAANSTGNIKILEMV.

The region spanning 1-268 (MKGSSESSSR…MSELLQSEFI (268 aa)) is the Protein kinase domain. Residues 126-165 (SCSDSGSDEDATTKSREIGSSRQEEILSERRSKQQEEVKK) are disordered. The span at 136–165 (ATTKSREIGSSRQEEILSERRSKQQEEVKK) shows a compositional bias: basic and acidic residues. Positions 272 to 326 (RENLEEREAAMELRDRIEEQELLLEFLFLIQQRKQEAADKLQDTISLLSSDIDQV) form a coiled coil. Disordered regions lie at residues 352–373 (QGAE…EESK) and 428–447 (GRSS…INDS). The span at 358–369 (AAEEENDDNSID) shows a compositional bias: acidic residues. WD repeat units follow at residues 482–521 (NSSN…KDGR), 531–571 (ASRS…LVTE), 574–614 (EHEK…SIGT), 616–656 (KTKA…LPLC), 660–698 (GHHK…SGIN), 707–746 (GHTN…PVLS), and 762–794 (DASQ…LEMV). Residues 635–649 (AFGSADHKVYYYDLR) carry the DWD box motif.

As to quaternary structure, interacts with COP1 and CO. Binds to CRY1 in response to blue light, this interaction prevents SPA1/COP1 complex formation and thus avoid COP1-dependent degradation of the transcription factor HY5 by the proteasome and promotes hypocotyl elongation.

The protein localises to the nucleus. Functionally, repressor of photomorphogenesis in the light. Probably part of the COP1/SPA E3 ubiquitin-protein ligase complex. The sequence is that of Protein SPA1-RELATED 4 (SPA4) from Arabidopsis thaliana (Mouse-ear cress).